The chain runs to 408 residues: NADH-quinone oxidoreductase subunit D (408 aa).

Belongs to the complex I 49 kDa subunit family. As to quaternary structure, NDH-1 is composed of 14 different subunits. Subunits NuoB, C, D, E, F, and G constitute the peripheral sector of the complex.

The protein resides in the cell inner membrane. It carries out the reaction a quinone + NADH + 5 H(+)(in) = a quinol + NAD(+) + 4 H(+)(out). In terms of biological role, NDH-1 shuttles electrons from NADH, via FMN and iron-sulfur (Fe-S) centers, to quinones in the respiratory chain. The immediate electron acceptor for the enzyme in this species is believed to be ubiquinone. Couples the redox reaction to proton translocation (for every two electrons transferred, four hydrogen ions are translocated across the cytoplasmic membrane), and thus conserves the redox energy in a proton gradient. In Campylobacter jejuni subsp. jejuni serotype O:6 (strain 81116 / NCTC 11828), this protein is NADH-quinone oxidoreductase subunit D.